Here is a 396-residue protein sequence, read N- to C-terminus: Elongation factor Tu (396 aa).

The region spanning 10–206 is the tr-type G domain; the sequence is KPHVNVGTIG…TLDEYIPEPE (197 aa). The segment at 19 to 26 is G1; sequence GHVDHGKT. 19-26 is a binding site for GTP; sequence GHVDHGKT. Residue T26 participates in Mg(2+) binding. Residues 60–64 form a G2 region; it reads GITIA. Residues 81-84 form a G3 region; sequence DCPG. GTP contacts are provided by residues 81-85 and 136-139; these read DCPGH and NKAD. Positions 136–139 are G4; the sequence is NKAD. The G5 stretch occupies residues 174 to 176; it reads SAL.

Belongs to the TRAFAC class translation factor GTPase superfamily. Classic translation factor GTPase family. EF-Tu/EF-1A subfamily. As to quaternary structure, monomer.

It localises to the cytoplasm. The enzyme catalyses GTP + H2O = GDP + phosphate + H(+). GTP hydrolase that promotes the GTP-dependent binding of aminoacyl-tRNA to the A-site of ribosomes during protein biosynthesis. In Alcanivorax borkumensis (strain ATCC 700651 / DSM 11573 / NCIMB 13689 / SK2), this protein is Elongation factor Tu.